The primary structure comprises 320 residues: GTP 3',8-cyclase (320 aa).

The Radical SAM core domain maps to 5 to 225 (QFGRKINYLR…IQLIKKDEKA (221 aa)). A GTP-binding site is contributed by Arg14. [4Fe-4S] cluster is bound by residues Cys21 and Cys25. Tyr27 provides a ligand contact to S-adenosyl-L-methionine. Cys28 serves as a coordination point for [4Fe-4S] cluster. Residue Arg64 participates in GTP binding. Position 68 (Gly68) interacts with S-adenosyl-L-methionine. Thr95 is a GTP binding site. Ser119 provides a ligand contact to S-adenosyl-L-methionine. Lys155 serves as a coordination point for GTP. Met189 provides a ligand contact to S-adenosyl-L-methionine. Positions 248 and 251 each coordinate [4Fe-4S] cluster. 253–255 (RIR) serves as a coordination point for GTP. Residue Cys265 participates in [4Fe-4S] cluster binding.

This sequence belongs to the radical SAM superfamily. MoaA family. Monomer and homodimer. [4Fe-4S] cluster is required as a cofactor.

It catalyses the reaction GTP + AH2 + S-adenosyl-L-methionine = (8S)-3',8-cyclo-7,8-dihydroguanosine 5'-triphosphate + 5'-deoxyadenosine + L-methionine + A + H(+). The protein operates within cofactor biosynthesis; molybdopterin biosynthesis. Functionally, catalyzes the cyclization of GTP to (8S)-3',8-cyclo-7,8-dihydroguanosine 5'-triphosphate. The chain is GTP 3',8-cyclase from Campylobacter jejuni (strain RM1221).